We begin with the raw amino-acid sequence, 115 residues long: NADH-ubiquinone oxidoreductase chain 3 (115 aa).

3 helical membrane-spanning segments follow: residues 3-23 (FVLI…ITFW), 55-75 (FFLV…LLPL), and 84-104 (LPLM…SLAY).

It belongs to the complex I subunit 3 family. Core subunit of respiratory chain NADH dehydrogenase (Complex I) which is composed of 45 different subunits. Interacts with TMEM186. Interacts with TMEM242.

It localises to the mitochondrion inner membrane. It catalyses the reaction a ubiquinone + NADH + 5 H(+)(in) = a ubiquinol + NAD(+) + 4 H(+)(out). In terms of biological role, core subunit of the mitochondrial membrane respiratory chain NADH dehydrogenase (Complex I) which catalyzes electron transfer from NADH through the respiratory chain, using ubiquinone as an electron acceptor. Essential for the catalytic activity of complex I. The chain is NADH-ubiquinone oxidoreductase chain 3 from Pan paniscus (Pygmy chimpanzee).